An 818-amino-acid chain; its full sequence is uncharacterized protein (818 aa).

Composition is skewed to low complexity over residues 1-33 (MYNN…NYIS), 44-68 (NNFL…PQQQ), and 97-150 (NNSN…TKSN). Disordered stretches follow at residues 1 to 68 (MYNN…PQQQ), 92 to 150 (LNTG…TKSN), 164 to 220 (KLDN…KYHE), 284 to 306 (NMNG…NNSD), and 415 to 445 (NINK…NNNN). Composition is skewed to acidic residues over residues 172 to 190 (SEEE…EEKE) and 205 to 214 (DNNSQDEDKE). Residues 284-302 (NMNGSSDSSDSSNSSGHSR) show a composition bias toward low complexity. The helical transmembrane segment at 534 to 554 (IIAIIVIVWPLIANLTYKFIV) threads the bilayer. Positions 779–808 (ANNFMSDSNRSPSSSSSSSSSTSDSENGML) are disordered. A compositionally biased stretch (low complexity) spans 784 to 803 (SDSNRSPSSSSSSSSSTSDS).

It localises to the membrane. This is an uncharacterized protein from Dictyostelium discoideum (Social amoeba).